A 445-amino-acid chain; its full sequence is Exodeoxyribonuclease 7 large subunit (445 aa).

This sequence belongs to the XseA family. Heterooligomer composed of large and small subunits.

The protein resides in the cytoplasm. It catalyses the reaction Exonucleolytic cleavage in either 5'- to 3'- or 3'- to 5'-direction to yield nucleoside 5'-phosphates.. In terms of biological role, bidirectionally degrades single-stranded DNA into large acid-insoluble oligonucleotides, which are then degraded further into small acid-soluble oligonucleotides. The protein is Exodeoxyribonuclease 7 large subunit of Staphylococcus aureus (strain bovine RF122 / ET3-1).